The primary structure comprises 122 residues: Large ribosomal subunit protein uL14 (122 aa).

This sequence belongs to the universal ribosomal protein uL14 family. As to quaternary structure, part of the 50S ribosomal subunit. Forms a cluster with proteins L3 and L19. In the 70S ribosome, L14 and L19 interact and together make contacts with the 16S rRNA in bridges B5 and B8.

In terms of biological role, binds to 23S rRNA. Forms part of two intersubunit bridges in the 70S ribosome. The protein is Large ribosomal subunit protein uL14 of Aeromonas salmonicida (strain A449).